A 203-amino-acid chain; its full sequence is Peptidyl-tRNA hydrolase (203 aa).

A tRNA-binding site is contributed by Tyr-14. His-19 acts as the Proton acceptor in catalysis. Residues Tyr-64, Asn-66, and Asn-112 each coordinate tRNA.

This sequence belongs to the PTH family. As to quaternary structure, monomer.

It localises to the cytoplasm. It catalyses the reaction an N-acyl-L-alpha-aminoacyl-tRNA + H2O = an N-acyl-L-amino acid + a tRNA + H(+). Hydrolyzes ribosome-free peptidyl-tRNAs (with 1 or more amino acids incorporated), which drop off the ribosome during protein synthesis, or as a result of ribosome stalling. In terms of biological role, catalyzes the release of premature peptidyl moieties from peptidyl-tRNA molecules trapped in stalled 50S ribosomal subunits, and thus maintains levels of free tRNAs and 50S ribosomes. This is Peptidyl-tRNA hydrolase from Methylobacterium nodulans (strain LMG 21967 / CNCM I-2342 / ORS 2060).